Here is a 242-residue protein sequence, read N- to C-terminus: MNAEKAPERHNVDHEEIAKFEAVASRWWDLEGEFKPLHRINPLRLGYIAERSGGLFGKKVLDVGCGGGILAESMAREGATVTGLDMGFEPLQVARLHALESGIEVEYVQETVEEHAAKHAQQYDVVTCMEMLEHVPDPQSVVHACAQLVKPGGEVFFSTLNRNGKSWLMAVVGAEYILRMVPKGTHDVKKFIKPAELLSWVDETILKEQHITGLHYNPITNTFKLGPGVDVNYMLHTRAKKA.

Arg44, Gly64, Asp85, and Met129 together coordinate S-adenosyl-L-methionine.

It belongs to the methyltransferase superfamily. UbiG/COQ3 family.

The catalysed reaction is a 3-demethylubiquinol + S-adenosyl-L-methionine = a ubiquinol + S-adenosyl-L-homocysteine + H(+). It catalyses the reaction a 3-(all-trans-polyprenyl)benzene-1,2-diol + S-adenosyl-L-methionine = a 2-methoxy-6-(all-trans-polyprenyl)phenol + S-adenosyl-L-homocysteine + H(+). It participates in cofactor biosynthesis; ubiquinone biosynthesis. Its function is as follows. O-methyltransferase that catalyzes the 2 O-methylation steps in the ubiquinone biosynthetic pathway. In Salmonella arizonae (strain ATCC BAA-731 / CDC346-86 / RSK2980), this protein is Ubiquinone biosynthesis O-methyltransferase.